Here is a 366-residue protein sequence, read N- to C-terminus: Chorismate synthase (366 aa).

2 residues coordinate NADP(+): arginine 48 and arginine 54. FMN contacts are provided by residues 132-134 (RSS), 244-245 (NA), glycine 289, 304-308 (KPTSS), and arginine 330.

The protein belongs to the chorismate synthase family. In terms of assembly, homotetramer. It depends on FMNH2 as a cofactor.

The catalysed reaction is 5-O-(1-carboxyvinyl)-3-phosphoshikimate = chorismate + phosphate. Its pathway is metabolic intermediate biosynthesis; chorismate biosynthesis; chorismate from D-erythrose 4-phosphate and phosphoenolpyruvate: step 7/7. Its function is as follows. Catalyzes the anti-1,4-elimination of the C-3 phosphate and the C-6 proR hydrogen from 5-enolpyruvylshikimate-3-phosphate (EPSP) to yield chorismate, which is the branch point compound that serves as the starting substrate for the three terminal pathways of aromatic amino acid biosynthesis. This reaction introduces a second double bond into the aromatic ring system. This is Chorismate synthase from Methylorubrum extorquens (strain PA1) (Methylobacterium extorquens).